Here is a 140-residue protein sequence, read N- to C-terminus: Gonadotropin subunit beta-2 (140 aa).

Residues 1 to 23 form the signal peptide; sequence MSVPASSFLLLCFLMNSFSPAQS. Disulfide bonds link Cys-29–Cys-77, Cys-43–Cys-92, Cys-46–Cys-130, Cys-54–Cys-108, Cys-58–Cys-110, and Cys-113–Cys-120. A glycan (N-linked (GlcNAc...) asparagine) is linked at Asn-33.

It belongs to the glycoprotein hormones subunit beta family. In terms of assembly, heterodimer of an alpha and a beta chain.

It is found in the secreted. Functionally, involved in gametogenesis and steroidogenesis. The protein is Gonadotropin subunit beta-2 (cgbb) of Ictalurus punctatus (Channel catfish).